A 243-amino-acid chain; its full sequence is 4-hydroxy-tetrahydrodipicolinate reductase (243 aa).

Residues 9–14 (GANGKM), 78–80 (GTS), and 104–107 (APNF) each bind NAD(+). The Proton donor/acceptor role is filled by His134. His135 contacts (S)-2,3,4,5-tetrahydrodipicolinate. The Proton donor role is filled by Lys138. (S)-2,3,4,5-tetrahydrodipicolinate is bound at residue 144–145 (GT).

This sequence belongs to the DapB family.

It localises to the cytoplasm. It carries out the reaction (S)-2,3,4,5-tetrahydrodipicolinate + NAD(+) + H2O = (2S,4S)-4-hydroxy-2,3,4,5-tetrahydrodipicolinate + NADH + H(+). The enzyme catalyses (S)-2,3,4,5-tetrahydrodipicolinate + NADP(+) + H2O = (2S,4S)-4-hydroxy-2,3,4,5-tetrahydrodipicolinate + NADPH + H(+). The protein operates within amino-acid biosynthesis; L-lysine biosynthesis via DAP pathway; (S)-tetrahydrodipicolinate from L-aspartate: step 4/4. Its function is as follows. Catalyzes the conversion of 4-hydroxy-tetrahydrodipicolinate (HTPA) to tetrahydrodipicolinate. The chain is 4-hydroxy-tetrahydrodipicolinate reductase from Legionella pneumophila (strain Paris).